The primary structure comprises 452 residues: Digeranylgeranylglycerophospholipid reductase (452 aa).

FAD contacts are provided by residues 15 to 16 (FA), 35 to 36 (DS), and 45 to 50 (KPCGDA). His55 serves as a coordination point for a 2,3-bis-O-phytanyl-sn-glycerol 1-phospholipid. Positions 122 and 288 each coordinate FAD. His297 is an a 2,3-bis-O-phytanyl-sn-glycerol 1-phospholipid binding site. Residue 300–301 (GK) participates in FAD binding. Cys310 and Cys335 are joined by a disulfide. Tyr340 contacts a 2,3-bis-O-phytanyl-sn-glycerol 1-phospholipid.

It belongs to the geranylgeranyl reductase family. As to quaternary structure, monomer. FAD is required as a cofactor.

It carries out the reaction a 2,3-bis-O-phytanyl-sn-glycerol 1-phospholipid + 8 A = a 2,3-bis-O-(geranylgeranyl)-sn-glycerol 1-phospholipid + 8 AH2. It catalyses the reaction 2,3-bis-O-(phytanyl)-sn-glycerol 1-phosphate + 8 A = 2,3-bis-O-(geranylgeranyl)-sn-glycerol 1-phosphate + 8 AH2. The enzyme catalyses sn-3-O-phytanylglycerol 1-phosphate + 4 A = sn-3-O-(geranylgeranyl)glycerol 1-phosphate + 4 AH2. The catalysed reaction is phytyl diphosphate + 3 A = (2E,6E,10E)-geranylgeranyl diphosphate + 3 AH2. It participates in membrane lipid metabolism; glycerophospholipid metabolism. Functionally, is involved in the reduction of 2,3-digeranylgeranylglycerophospholipids (unsaturated archaeols) into 2,3-diphytanylglycerophospholipids (saturated archaeols) in the biosynthesis of archaeal membrane lipids. Catalyzes the formation of archaetidic acid (2,3-di-O-phytanyl-sn-glyceryl phosphate) from 2,3-di-O-geranylgeranylglyceryl phosphate (DGGGP) via the hydrogenation of each double bond of the isoprenoid chains. Is not active with NADPH or NADH as an electron donor; the physiological reducing agent is unknown. Is also active on the more upstream precursors of membrane lipid biosynthesis, catalyzing the complete reduction of 3-O-geranylgeranylglyceryl phosphate (GGGP) to 3-O-phytanylglyceryl phosphate, and the partial reduction of geranylgeranyl diphosphate (GGPP) to phytyl diphosphate, thus reducing three of four GGPP double bonds and preserving the allylic double bond (at position 2). This reaction product is a reactive prenyl donor, which can be used as a substrate by archaeal prenyltransferases such as GGGP synthases. The chain is Digeranylgeranylglycerophospholipid reductase from Sulfolobus acidocaldarius (strain ATCC 33909 / DSM 639 / JCM 8929 / NBRC 15157 / NCIMB 11770).